A 571-amino-acid chain; its full sequence is Sulfite reductase [NADPH] hemoprotein beta-component (571 aa).

Residues C436, C442, C481, and C485 each coordinate [4Fe-4S] cluster. C485 is a siroheme binding site.

Belongs to the nitrite and sulfite reductase 4Fe-4S domain family. In terms of assembly, alpha(8)-beta(8). The alpha component is a flavoprotein, the beta component is a hemoprotein. Requires siroheme as cofactor. [4Fe-4S] cluster serves as cofactor.

It catalyses the reaction hydrogen sulfide + 3 NADP(+) + 3 H2O = sulfite + 3 NADPH + 4 H(+). It participates in sulfur metabolism; hydrogen sulfide biosynthesis; hydrogen sulfide from sulfite (NADPH route): step 1/1. Its function is as follows. Component of the sulfite reductase complex that catalyzes the 6-electron reduction of sulfite to sulfide. This is one of several activities required for the biosynthesis of L-cysteine from sulfate. This Bacillus velezensis (strain DSM 23117 / BGSC 10A6 / LMG 26770 / FZB42) (Bacillus amyloliquefaciens subsp. plantarum) protein is Sulfite reductase [NADPH] hemoprotein beta-component.